The chain runs to 262 residues: Acyl-[acyl-carrier-protein]--UDP-N-acetylglucosamine O-acyltransferase (262 aa).

The protein belongs to the transferase hexapeptide repeat family. LpxA subfamily. Homotrimer.

It is found in the cytoplasm. The catalysed reaction is a (3R)-hydroxyacyl-[ACP] + UDP-N-acetyl-alpha-D-glucosamine = a UDP-3-O-[(3R)-3-hydroxyacyl]-N-acetyl-alpha-D-glucosamine + holo-[ACP]. It functions in the pathway glycolipid biosynthesis; lipid IV(A) biosynthesis; lipid IV(A) from (3R)-3-hydroxytetradecanoyl-[acyl-carrier-protein] and UDP-N-acetyl-alpha-D-glucosamine: step 1/6. Involved in the biosynthesis of lipid A, a phosphorylated glycolipid that anchors the lipopolysaccharide to the outer membrane of the cell. The protein is Acyl-[acyl-carrier-protein]--UDP-N-acetylglucosamine O-acyltransferase of Burkholderia ambifaria (strain MC40-6).